A 180-amino-acid polypeptide reads, in one-letter code: Bifunctional protein PyrR (180 aa).

The short motif at 101-113 (VILVDDVLYTGRT) is the PRPP-binding element.

This sequence belongs to the purine/pyrimidine phosphoribosyltransferase family. PyrR subfamily. Homodimer and homohexamer; in equilibrium.

It carries out the reaction UMP + diphosphate = 5-phospho-alpha-D-ribose 1-diphosphate + uracil. Its function is as follows. Regulates transcriptional attenuation of the pyrimidine nucleotide (pyr) operon by binding in a uridine-dependent manner to specific sites on pyr mRNA. This disrupts an antiterminator hairpin in the RNA and favors formation of a downstream transcription terminator, leading to a reduced expression of downstream genes. In terms of biological role, also displays a weak uracil phosphoribosyltransferase activity which is not physiologically significant. The polypeptide is Bifunctional protein PyrR (Bacillus cereus (strain ATCC 14579 / DSM 31 / CCUG 7414 / JCM 2152 / NBRC 15305 / NCIMB 9373 / NCTC 2599 / NRRL B-3711)).